A 195-amino-acid polypeptide reads, in one-letter code: Holliday junction branch migration complex subunit RuvA (195 aa).

The tract at residues 1–66 (MNYLVFKVIY…LIIKDLYGFR (66 aa)) is domain I. Residues 67-141 (TYNERLLFID…KYINKVSEKN (75 aa)) are domain II. A region of interest (flexible linker) is located at residue Asn-141. Residues 141–195 (NPWAKELSIGLENLGYDKKDIEYAITKVKVDTQQNIDISEIIGCAIKEISLRHEN) are domain III.

Belongs to the RuvA family. In terms of assembly, homotetramer. Forms an RuvA(8)-RuvB(12)-Holliday junction (HJ) complex. HJ DNA is sandwiched between 2 RuvA tetramers; dsDNA enters through RuvA and exits via RuvB. An RuvB hexamer assembles on each DNA strand where it exits the tetramer. Each RuvB hexamer is contacted by two RuvA subunits (via domain III) on 2 adjacent RuvB subunits; this complex drives branch migration. In the full resolvosome a probable DNA-RuvA(4)-RuvB(12)-RuvC(2) complex forms which resolves the HJ.

Its subcellular location is the cytoplasm. The RuvA-RuvB-RuvC complex processes Holliday junction (HJ) DNA during genetic recombination and DNA repair, while the RuvA-RuvB complex plays an important role in the rescue of blocked DNA replication forks via replication fork reversal (RFR). RuvA specifically binds to HJ cruciform DNA, conferring on it an open structure. The RuvB hexamer acts as an ATP-dependent pump, pulling dsDNA into and through the RuvAB complex. HJ branch migration allows RuvC to scan DNA until it finds its consensus sequence, where it cleaves and resolves the cruciform DNA. This chain is Holliday junction branch migration complex subunit RuvA, found in Ureaplasma urealyticum serovar 10 (strain ATCC 33699 / Western).